A 321-amino-acid polypeptide reads, in one-letter code: 5,10-methylenetetrahydromethanopterin reductase (321 aa).

Belongs to the mer family. In terms of assembly, homotetramer.

The protein localises to the cytoplasm. It catalyses the reaction 5-methyl-5,6,7,8-tetrahydromethanopterin + oxidized coenzyme F420-(gamma-L-Glu)(n) + H(+) = 5,10-methylenetetrahydromethanopterin + reduced coenzyme F420-(gamma-L-Glu)(n). It participates in one-carbon metabolism; methanogenesis from CO(2); methyl-coenzyme M from 5,10-methylene-5,6,7,8-tetrahydromethanopterin: step 1/2. In terms of biological role, catalyzes the reversible reduction of methylene-H(4)MPT to methyl-H(4)MPT. This Methanothermobacter marburgensis (strain ATCC BAA-927 / DSM 2133 / JCM 14651 / NBRC 100331 / OCM 82 / Marburg) (Methanobacterium thermoautotrophicum) protein is 5,10-methylenetetrahydromethanopterin reductase.